We begin with the raw amino-acid sequence, 180 residues long: dCTP deaminase, dUMP-forming (180 aa).

DCTP-binding positions include 100 to 105, Asp-117, 125 to 127, Gln-146, Tyr-160, and Gln-167; these read RSSLGR and TLE. Glu-127 serves as the catalytic Proton donor/acceptor.

Belongs to the dCTP deaminase family. In terms of assembly, homotrimer.

The enzyme catalyses dCTP + 2 H2O = dUMP + NH4(+) + diphosphate. Its pathway is pyrimidine metabolism; dUMP biosynthesis; dUMP from dCTP: step 1/1. Bifunctional enzyme that catalyzes both the deamination of dCTP to dUTP and the hydrolysis of dUTP to dUMP without releasing the toxic dUTP intermediate. The polypeptide is dCTP deaminase, dUMP-forming (Sulfurihydrogenibium sp. (strain YO3AOP1)).